A 201-amino-acid polypeptide reads, in one-letter code: Alpha-1-acid glycoprotein (201 aa).

An N-terminal signal peptide occupies residues 1-18; that stretch reads MALPWALAVLSLLPLLHA. N-linked (GlcNAc...) asparagine glycosylation is found at Asn-25, Asn-33, Asn-87, Asn-93, Asn-103, and Asn-169. Residues Cys-90 and Cys-183 are joined by a disulfide bond.

The protein belongs to the calycin superfamily. Lipocalin family.

Its subcellular location is the secreted. In terms of biological role, functions as a transport protein in the blood stream. Binds various ligands in the interior of its beta-barrel domain. Appears to function in modulating the activity of the immune system during the acute-phase reaction. The chain is Alpha-1-acid glycoprotein (ORM1) from Oryctolagus cuniculus (Rabbit).